Here is a 123-residue protein sequence, read N- to C-terminus: VQ motif-containing protein 29 (123 aa).

A disordered region spans residues 24-55; the sequence is TKNYLTSLHSTRKQPSKPLKRPAISSPLNPMH. Residues 33-43 show a composition bias toward basic residues; that stretch reads STRKQPSKPLK. Positions 66–75 match the VQ motif; it reads FKVLVQRLTG. Residues 77–94 show a composition bias toward basic and acidic residues; it reads PEHETVQAKPLKTSDDAA. The disordered stretch occupies residues 77 to 123; sequence PEHETVQAKPLKTSDDAAKQSSSSFAFDPSSSWGDFSFQNPANISRW. Residues 97–108 are compositionally biased toward low complexity; that stretch reads SSSSFAFDPSSS. Polar residues predominate over residues 109 to 123; the sequence is WGDFSFQNPANISRW.

The protein resides in the nucleus. Functionally, may function as negative regulator of flowering transition. This Arabidopsis thaliana (Mouse-ear cress) protein is VQ motif-containing protein 29.